The primary structure comprises 550 residues: tRNA modification GTPase MnmE (550 aa).

(6S)-5-formyl-5,6,7,8-tetrahydrofolate contacts are provided by Arg-20, Glu-78, and Arg-116. Residues 212-478 enclose the TrmE-type G domain; sequence GFSVVIVGKP…LLDKIFDIIS (267 aa). Residue Asn-222 coordinates K(+). Residues 222–227, 241–247, and 266–269 each bind GTP; these read NVGKST, TDIPGTT, and DTAG. Ser-226 is a binding site for Mg(2+). Thr-241, Ile-243, and Thr-246 together coordinate K(+). Thr-247 is a Mg(2+) binding site. Lys-550 serves as a coordination point for (6S)-5-formyl-5,6,7,8-tetrahydrofolate.

This sequence belongs to the TRAFAC class TrmE-Era-EngA-EngB-Septin-like GTPase superfamily. TrmE GTPase family. As to quaternary structure, homodimer. Heterotetramer of two MnmE and two MnmG subunits. The cofactor is K(+).

The protein localises to the cytoplasm. Exhibits a very high intrinsic GTPase hydrolysis rate. Involved in the addition of a carboxymethylaminomethyl (cmnm) group at the wobble position (U34) of certain tRNAs, forming tRNA-cmnm(5)s(2)U34. The sequence is that of tRNA modification GTPase MnmE from Neorickettsia sennetsu (strain ATCC VR-367 / Miyayama) (Ehrlichia sennetsu).